A 132-amino-acid polypeptide reads, in one-letter code: MDEEVVGQIGQGLMVLVGITHDDTEDDAAYLADKVVNLRIFDDSEGKMNLSLVDIGGEILSVSQFTLYGDTKKGRRPNYMNAAKPDKALGLYEKWNDLLREKGIKVETGTFGAMMDVQLTNSGPVTLIMDSK.

Belongs to the DTD family.

In terms of biological role, a non-functional D-aminoacyl-tRNA deacylase. The chain is Inactive D-aminoacyl-tRNA deacylase from Bacillus subtilis (strain 168).